Here is an 895-residue protein sequence, read N- to C-terminus: Protein translocase subunit SecA (895 aa).

ATP contacts are provided by residues Q89, 107 to 111 (GEGKT), and D502. Disordered regions lie at residues 560–579 (RRID…PGRT) and 848–884 (AAPA…CGSG). Zn(2+)-binding residues include C879, C881, C890, and H891.

This sequence belongs to the SecA family. Monomer and homodimer. Part of the essential Sec protein translocation apparatus which comprises SecA, SecYEG and auxiliary proteins SecDF-YajC and YidC. It depends on Zn(2+) as a cofactor.

It localises to the cell inner membrane. The protein localises to the cytoplasm. The catalysed reaction is ATP + H2O + cellular proteinSide 1 = ADP + phosphate + cellular proteinSide 2.. In terms of biological role, part of the Sec protein translocase complex. Interacts with the SecYEG preprotein conducting channel. Has a central role in coupling the hydrolysis of ATP to the transfer of proteins into and across the cell membrane, serving both as a receptor for the preprotein-SecB complex and as an ATP-driven molecular motor driving the stepwise translocation of polypeptide chains across the membrane. The protein is Protein translocase subunit SecA of Ruegeria sp. (strain TM1040) (Silicibacter sp.).